We begin with the raw amino-acid sequence, 241 residues long: dTTP/UTP pyrophosphatase (241 aa).

S38 bears the Phosphoserine mark. D105 acts as the Proton acceptor in catalysis.

It belongs to the Maf family. YhdE subfamily. The cofactor is a divalent metal cation.

It is found in the cytoplasm. The protein localises to the nucleus. It catalyses the reaction dTTP + H2O = dTMP + diphosphate + H(+). It carries out the reaction UTP + H2O = UMP + diphosphate + H(+). Its function is as follows. Nucleoside triphosphate pyrophosphatase that hydrolyzes dTTP and UTP. May have a dual role in cell division arrest and in preventing the incorporation of modified nucleotides into cellular nucleic acids. The polypeptide is dTTP/UTP pyrophosphatase (Schizosaccharomyces pombe (strain 972 / ATCC 24843) (Fission yeast)).